The chain runs to 240 residues: Adenylate dimethylallyltransferase (240 aa).

The protein belongs to the isopentenyl transferase family.

The catalysed reaction is dimethylallyl diphosphate + AMP = N(6)-(dimethylallyl)adenosine 5'-phosphate + diphosphate. Transfers dimethylallyl groups to AMP as part of the biosynthesis of cytokinin phytohormones. This is Adenylate dimethylallyltransferase (ipt) from Agrobacterium vitis (Rhizobium vitis).